A 128-amino-acid chain; its full sequence is Prefoldin subunit 1 (128 aa).

Coiled coils occupy residues 17–37 (MIEL…KEGD) and 81–115 (LKDS…LLQQ).

It belongs to the prefoldin subunit beta family. In terms of assembly, heterohexamer of two PFD-alpha type and four PFD-beta type subunits forming prefoldin co-chaperone complex. Interacts with LSM8, a specific subunit of the LSM2-8 complex, which is a core component of the spliceosome.

The protein resides in the cytoplasm. It localises to the nucleus. Functionally, binds specifically to cytosolic chaperonin (c-CPN) and transfers target proteins to it. Binds to nascent polypeptide chain and promotes folding in an environment in which there are many competing pathways for nonnative proteins. Together with other chaperonins, contribute to the regulation of gene expression by modulating the spliceosome function on pre-mRNA splicing post-transcriptionally by acting as a co-chaperone of Hsp90 to control levels of LSM8. Required for microtubules (MTs) organization and dynamicity. Involved in the process leading to microtubules dissociation in response to gibberellic acid (GA) probably due to the DELLA proteins-mediated translocation of the prefoldin co-chaperone complex from the cytoplasm to the nucleus. The sequence is that of Prefoldin subunit 1 from Arabidopsis thaliana (Mouse-ear cress).